The primary structure comprises 451 residues: Bifunctional protein GlmU (451 aa).

Positions 1–225 are pyrophosphorylase; it reads MLEIIILAAG…EYEVLGVNNR (225 aa). UDP-N-acetyl-alpha-D-glucosamine contacts are provided by residues 7 to 10, K21, Q72, 77 to 78, 99 to 101, G136, E150, N165, and N223; these read LAAG, GT, and YGD. D101 contacts Mg(2+). N223 lines the Mg(2+) pocket. The interval 226 to 246 is linker; that stretch reads LQQAELERIFQRQVAEELMVA. The interval 247 to 451 is N-acetyltransferase; it reads GATLLDPARL…IKGWARPVKK (205 aa). R329 and K347 together coordinate UDP-N-acetyl-alpha-D-glucosamine. Residue H359 is the Proton acceptor of the active site. The UDP-N-acetyl-alpha-D-glucosamine site is built by Y362 and N373. Residues A376, 382 to 383, S401, A419, and R436 contribute to the acetyl-CoA site; that span reads NY.

This sequence in the N-terminal section; belongs to the N-acetylglucosamine-1-phosphate uridyltransferase family. The protein in the C-terminal section; belongs to the transferase hexapeptide repeat family. As to quaternary structure, homotrimer. The cofactor is Mg(2+).

The protein resides in the cytoplasm. The enzyme catalyses alpha-D-glucosamine 1-phosphate + acetyl-CoA = N-acetyl-alpha-D-glucosamine 1-phosphate + CoA + H(+). It carries out the reaction N-acetyl-alpha-D-glucosamine 1-phosphate + UTP + H(+) = UDP-N-acetyl-alpha-D-glucosamine + diphosphate. Its pathway is nucleotide-sugar biosynthesis; UDP-N-acetyl-alpha-D-glucosamine biosynthesis; N-acetyl-alpha-D-glucosamine 1-phosphate from alpha-D-glucosamine 6-phosphate (route II): step 2/2. It functions in the pathway nucleotide-sugar biosynthesis; UDP-N-acetyl-alpha-D-glucosamine biosynthesis; UDP-N-acetyl-alpha-D-glucosamine from N-acetyl-alpha-D-glucosamine 1-phosphate: step 1/1. The protein operates within bacterial outer membrane biogenesis; LPS lipid A biosynthesis. Functionally, catalyzes the last two sequential reactions in the de novo biosynthetic pathway for UDP-N-acetylglucosamine (UDP-GlcNAc). The C-terminal domain catalyzes the transfer of acetyl group from acetyl coenzyme A to glucosamine-1-phosphate (GlcN-1-P) to produce N-acetylglucosamine-1-phosphate (GlcNAc-1-P), which is converted into UDP-GlcNAc by the transfer of uridine 5-monophosphate (from uridine 5-triphosphate), a reaction catalyzed by the N-terminal domain. This Saccharophagus degradans (strain 2-40 / ATCC 43961 / DSM 17024) protein is Bifunctional protein GlmU.